Reading from the N-terminus, the 172-residue chain is MSDQQNTQQEDQPFFNIQRVYLKDMSLEQPNSPGIFLESEAPSVEVQVNVAASQLQEGIFEVVVTGTVTTKVQEKVAFLVEAHQAGIFDIRNVPVEQLDPLLGIACPTILYPYLRGNIADVITRAGFQAIHLSEINFQALYEQRLQAAMEEAQAAGGANSGIVMPDGSQARH.

This sequence belongs to the SecB family. In terms of assembly, homotetramer, a dimer of dimers. One homotetramer interacts with 1 SecA dimer.

Its subcellular location is the cytoplasm. Its function is as follows. One of the proteins required for the normal export of preproteins out of the cell cytoplasm. It is a molecular chaperone that binds to a subset of precursor proteins, maintaining them in a translocation-competent state. It also specifically binds to its receptor SecA. In Cupriavidus pinatubonensis (strain JMP 134 / LMG 1197) (Cupriavidus necator (strain JMP 134)), this protein is Protein-export protein SecB.